A 161-amino-acid chain; its full sequence is MSLIPNNWFNTGRRSNIFDPFSLDEIWDPFFGLPSTLSTVPRSETAAETAAFANARIDWKETPEAHVFKADLPGVKKEEVKVEVEDGNVLRISGQRAREKEEKNDTWHRVERSSGQFMRKFRLPENAKVDQVKAGMENGVLTVTVPKNEAPKPQVKAINVY.

The 114-residue stretch at 48-161 (ETAAFANARI…KPQVKAINVY (114 aa)) folds into the sHSP domain.

This sequence belongs to the small heat shock protein (HSP20) family. Forms oligomeric structures.

The protein resides in the cytoplasm. The polypeptide is 18.3 kDa class I heat shock protein (HSP18) (Oxybasis rubra (Red goosefoot)).